Consider the following 256-residue polypeptide: MNNDVFPNKFKAALAAKQVQIGCWSALSNPISTEVLGLAGFDWLVLDGEHAPNDISTFIPQLMALKGSASAPVVRVPTNEPVIIKRLLDIGFYNFLIPFVETKEKAELAVASTRYPPEGIRGVSVSHRANMFGTVADYFAQSNKNITILVQIESQQGVDNVDAIAATEGVDGIFVGPSDLAAALGHLGNASHPDVQKAIQHIFNRASAHGKPSGILAPVEADARRYLEWGATFVAVGSDLGVFRSATQKLADTFKK.

H50 acts as the Proton acceptor in catalysis. A substrate-binding site is contributed by Q151. Position 153 (E153) interacts with Mg(2+). Substrate is bound by residues S178 and D179. D179 is a Mg(2+) binding site.

Belongs to the HpcH/HpaI aldolase family. KDGluc aldolase subfamily. Homohexamer; trimer of dimers. It depends on Mg(2+) as a cofactor.

The catalysed reaction is 5-dehydro-4-deoxy-D-glucarate = 2-hydroxy-3-oxopropanoate + pyruvate. It carries out the reaction 2-dehydro-3-deoxy-D-glucarate = 2-hydroxy-3-oxopropanoate + pyruvate. Its pathway is carbohydrate acid metabolism; galactarate degradation; D-glycerate from galactarate: step 2/3. Its function is as follows. Catalyzes the reversible retro-aldol cleavage of both 5-keto-4-deoxy-D-glucarate and 2-keto-3-deoxy-D-glucarate to pyruvate and tartronic semialdehyde. The protein is 5-keto-4-deoxy-D-glucarate aldolase of Escherichia coli (strain ATCC 8739 / DSM 1576 / NBRC 3972 / NCIMB 8545 / WDCM 00012 / Crooks).